Here is a 60-residue protein sequence, read N- to C-terminus: MAKPARHTSKAKRNKRRTHYKLTAPSVQFDETTGDYSRSHRVSLKGYYKGRKIAKANEAK.

A compositionally biased stretch (basic residues) spans 1-20; the sequence is MAKPARHTSKAKRNKRRTHY. The segment at 1 to 22 is disordered; it reads MAKPARHTSKAKRNKRRTHYKL.

This sequence belongs to the bacterial ribosomal protein bL32 family.

This chain is Large ribosomal subunit protein bL32, found in Streptococcus agalactiae serotype V (strain ATCC BAA-611 / 2603 V/R).